The sequence spans 427 residues: Cryptic catabolic NAD-specific glutamate dehydrogenase GudB (427 aa).

Substrate-binding residues include Lys80 and Lys107. Catalysis depends on Lys119, which acts as the Proton donor. NAD(+) contacts are provided by Thr203 and Asn234. Position 361 (Ser361) interacts with substrate.

This sequence belongs to the Glu/Leu/Phe/Val dehydrogenases family. As to quaternary structure, homohexamer.

The catalysed reaction is L-glutamate + NAD(+) + H2O = 2-oxoglutarate + NH4(+) + NADH + H(+). Its function is as follows. GudB seems to be intrinsically inactive, however spontaneous mutations removing a 9-bp direct repeat within the wild-type gudB sequence activated the GudB protein and allowed more-efficient utilization of amino acids of the glutamate family (called gutB1). This 3 amino acid insertion presumably causes severe destabilization of the fold of the protein, leading to an inactive enzyme that is very quickly degraded. The cryptic GudB serves as a buffer that may compensate for mutations in the rocG gene and that can also be decryptified for the utilization of glutamate as a single carbon source in the absence of arginine. It is unable to synthesize glutamate. This Bacillus subtilis (strain 168) protein is Cryptic catabolic NAD-specific glutamate dehydrogenase GudB.